A 90-amino-acid polypeptide reads, in one-letter code: Large ribosomal subunit protein eL34 (90 aa).

Zn(2+) contacts are provided by Cys36, Cys39, Cys72, and Cys75. Residues 41 to 72 (RPLNGVPRGRPSELRKLPKTKKRPERPYPNLC) form a disordered region.

It belongs to the eukaryotic ribosomal protein eL34 family. In terms of assembly, part of the 50S ribosomal subunit. Requires Zn(2+) as cofactor.

This Thermococcus kodakarensis (strain ATCC BAA-918 / JCM 12380 / KOD1) (Pyrococcus kodakaraensis (strain KOD1)) protein is Large ribosomal subunit protein eL34.